We begin with the raw amino-acid sequence, 102 residues long: Small ribosomal subunit protein uS10 (102 aa).

This sequence belongs to the universal ribosomal protein uS10 family. As to quaternary structure, part of the 30S ribosomal subunit.

Involved in the binding of tRNA to the ribosomes. The chain is Small ribosomal subunit protein uS10 from Streptococcus sanguinis (strain SK36).